The chain runs to 95 residues: Aspartyl/glutamyl-tRNA(Asn/Gln) amidotransferase subunit C (95 aa).

Belongs to the GatC family. In terms of assembly, heterotrimer of A, B and C subunits.

It catalyses the reaction L-glutamyl-tRNA(Gln) + L-glutamine + ATP + H2O = L-glutaminyl-tRNA(Gln) + L-glutamate + ADP + phosphate + H(+). The enzyme catalyses L-aspartyl-tRNA(Asn) + L-glutamine + ATP + H2O = L-asparaginyl-tRNA(Asn) + L-glutamate + ADP + phosphate + 2 H(+). Its function is as follows. Allows the formation of correctly charged Asn-tRNA(Asn) or Gln-tRNA(Gln) through the transamidation of misacylated Asp-tRNA(Asn) or Glu-tRNA(Gln) in organisms which lack either or both of asparaginyl-tRNA or glutaminyl-tRNA synthetases. The reaction takes place in the presence of glutamine and ATP through an activated phospho-Asp-tRNA(Asn) or phospho-Glu-tRNA(Gln). In Shouchella clausii (strain KSM-K16) (Alkalihalobacillus clausii), this protein is Aspartyl/glutamyl-tRNA(Asn/Gln) amidotransferase subunit C.